The primary structure comprises 156 residues: Small ribosomal subunit protein uS7 (156 aa).

It belongs to the universal ribosomal protein uS7 family. Part of the 30S ribosomal subunit. Contacts proteins S9 and S11.

In terms of biological role, one of the primary rRNA binding proteins, it binds directly to 16S rRNA where it nucleates assembly of the head domain of the 30S subunit. Is located at the subunit interface close to the decoding center, probably blocks exit of the E-site tRNA. This is Small ribosomal subunit protein uS7 from Nitrobacter hamburgensis (strain DSM 10229 / NCIMB 13809 / X14).